A 182-amino-acid chain; its full sequence is Ribulose bisphosphate carboxylase small subunit, chloroplastic 4 (182 aa).

The transit peptide at 1-41 (MSAAMMNKSVVLSKQCTKPAATPKVVTSKRSFASTVANKNR) directs the protein to the chloroplast.

This sequence belongs to the RuBisCO small chain family. As to quaternary structure, heterohexadecamer of 8 large and 8 small subunits.

It is found in the plastid. The protein localises to the chloroplast. In terms of biological role, ruBisCO catalyzes two reactions: the carboxylation of D-ribulose 1,5-bisphosphate, the primary event in carbon dioxide fixation, as well as the oxidative fragmentation of the pentose substrate. Both reactions occur simultaneously and in competition at the same active site. Although the small subunit is not catalytic it is essential for maximal activity. The sequence is that of Ribulose bisphosphate carboxylase small subunit, chloroplastic 4 from Acetabularia acetabulum (Mermaid's wine glass).